A 523-amino-acid polypeptide reads, in one-letter code: 2-isopropylmalate synthase (523 aa).

One can recognise a Pyruvate carboxyltransferase domain in the interval Val-5 to Trp-267. The Mn(2+) site is built by Asp-14, His-202, His-204, and Asn-238. Residues Arg-392–Val-523 are regulatory domain.

It belongs to the alpha-IPM synthase/homocitrate synthase family. LeuA type 1 subfamily. Homodimer. Mn(2+) serves as cofactor.

Its subcellular location is the cytoplasm. The enzyme catalyses 3-methyl-2-oxobutanoate + acetyl-CoA + H2O = (2S)-2-isopropylmalate + CoA + H(+). It participates in amino-acid biosynthesis; L-leucine biosynthesis; L-leucine from 3-methyl-2-oxobutanoate: step 1/4. Functionally, catalyzes the condensation of the acetyl group of acetyl-CoA with 3-methyl-2-oxobutanoate (2-ketoisovalerate) to form 3-carboxy-3-hydroxy-4-methylpentanoate (2-isopropylmalate). This chain is 2-isopropylmalate synthase, found in Klebsiella pneumoniae subsp. pneumoniae (strain ATCC 700721 / MGH 78578).